The following is a 201-amino-acid chain: UPF0177 protein YajF (201 aa).

A run of 5 helical transmembrane segments spans residues 10-30 (TVIL…YVEY), 44-64 (ITVN…MLGI), 82-102 (ILIL…SQFI), 119-139 (VMGS…APIL), and 159-179 (FVFS…VFLI).

It belongs to the UPF0177 family.

Its subcellular location is the cell membrane. The polypeptide is UPF0177 protein YajF (yajF) (Lactococcus lactis subsp. lactis (strain IL1403) (Streptococcus lactis)).